We begin with the raw amino-acid sequence, 309 residues long: Protein FdhE homolog (309 aa).

The protein belongs to the FdhE family.

It localises to the cytoplasm. Its function is as follows. Necessary for formate dehydrogenase activity. In Yersinia enterocolitica serotype O:8 / biotype 1B (strain NCTC 13174 / 8081), this protein is Protein FdhE homolog.